Consider the following 323-residue polypeptide: MEFTFLGTSAGTPTRSRNVTGLALCLSGPKPWYLVDCGEGTQHQLMRTRYSVMQLRAMFITHIHGDHIFGLPGLLTSASMLGRTEPLDIIAPPQVRRFIDAVIENSDSSLSYPLNFINSEAPDFYWQDDHLGVTNVALSHRVPCRAYVFTERNLERQLQKEKLVADGIEPGPQWGDLQKGKDVLLDDGRLLRSNDYTHIPRTARKIIVGGDNDTPELLKDACQGTHVLIHEATYTQDVADRVGPWPQHSSAQQVARFAQATKLPNLVLTHFSSRYQSAPGGSPHINQLAAEALQHYKGQLFLARDFDTYRLEKDFQLHKVDHN.

Zn(2+) contacts are provided by histidine 62, histidine 64, aspartate 66, histidine 67, histidine 140, aspartate 211, and histidine 270. The active-site Proton acceptor is the aspartate 66.

It belongs to the RNase Z family. Homodimer. Zn(2+) serves as cofactor.

It catalyses the reaction Endonucleolytic cleavage of RNA, removing extra 3' nucleotides from tRNA precursor, generating 3' termini of tRNAs. A 3'-hydroxy group is left at the tRNA terminus and a 5'-phosphoryl group is left at the trailer molecule.. In terms of biological role, zinc phosphodiesterase, which displays some tRNA 3'-processing endonuclease activity. Probably involved in tRNA maturation, by removing a 3'-trailer from precursor tRNA. In Marinobacter nauticus (strain ATCC 700491 / DSM 11845 / VT8) (Marinobacter aquaeolei), this protein is Ribonuclease Z.